Consider the following 514-residue polypeptide: MRLYLLSLILVFYASVSSASLDSVNFGRGGGWGSGNQGVLCGTHYCPPGSTCESKHGHYICRPGGLITAPSGGDSGGIWTGGDKHKKDCGGTGCCKEGQYCTKLDGKEQCVYYPDDKGPQCGGSFCREGEICVLEHGVLGCLENPVEDSKANCGLFHCNYNEYCIMVNGYLQCLFSNGTAPFACGLQTCVPPQLCVKVENCQQCVSPPRPDNNCGDKYCDDEHQCVRKGLGYECIPKRLTCETKKCEASQVCIMVNGDAQCIVPPAAAAAEIRINNFRFNRNSVQRNAKPAQQQRSAQHAKPAQHGKPAQHATQQQHAKPAQNAKPVQHNAQQQHAKPAQHAAQQQHAKPAQHVAQQQQQQHAKPAAHTAAKPVQHNAQQQHAKPAAHTAAKPVQHNAAQQHAKPAAHGAKPAVNAARPVQHNAAQQHAKPAAHTAAKPVQHNAAQQHAKPAAKPAKLTNAQKLQQEHQRQEALAKQQARIRQQNLVKQAAQKKQTSQRAASKNQARPATQKRN.

The N-terminal stretch at 1–18 (MRLYLLSLILVFYASVSS) is a signal peptide. 2 consecutive Follistatin-like domains span residues 40–62 (LCGT…YICR) and 240–262 (TCET…AQCI). Over residues 285–297 (QRNAKPAQQQRSA) the composition is skewed to polar residues. Residues 285–514 (QRNAKPAQQQ…QARPATQKRN (230 aa)) are disordered. Composition is skewed to low complexity over residues 328-391 (QHNA…HTAA), 398-413 (AAQQ…AKPA), and 424-457 (AAQQ…KPAK). Residues 480–508 (RIRQQNLVKQAAQKKQTSQRAASKNQARP) show a composition bias toward polar residues.

The protein is Prespore vesicle protein (psvA) of Dictyostelium discoideum (Social amoeba).